The sequence spans 443 residues: Differentially expressed in FDCP 8 homolog A (443 aa).

The disordered stretch occupies residues 1 to 49; the sequence is MEYDDKLVRFRQGHLNPFDKQGGAERHPADSEAQPPKDSSTISPHSIPE. 2 consecutive Phorbol-ester/DAG-type zinc fingers follow at residues 134–185 and 364–424; these read EHRF…TKPC and IHTT…STSC.

This sequence belongs to the DEF8 family.

Positively regulates lysosome peripheral distribution and ruffled border formation in osteoclasts. Involved in bone resorption. The sequence is that of Differentially expressed in FDCP 8 homolog A (def8-a) from Xenopus laevis (African clawed frog).